A 108-amino-acid polypeptide reads, in one-letter code: Protein FMC1 homolog (108 aa).

It belongs to the FMC1 family.

In Caenorhabditis elegans, this protein is Protein FMC1 homolog.